The sequence spans 354 residues: Protein-arginine kinase (354 aa).

The region spanning 24–254 (IVLSSRIRLA…QQIIQQEKMA (231 aa)) is the Phosphagen kinase C-terminal domain. Residues 27-31 (SSRIR), His-92, Arg-125, 176-180 (RASVM), and 207-212 (RGIYGE) each bind ATP. The RDXXRA motif of the pArg binding pocket involved in allosteric regulation motif lies at 337–342 (RDYRRA).

This sequence belongs to the ATP:guanido phosphotransferase family.

The catalysed reaction is L-arginyl-[protein] + ATP = N(omega)-phospho-L-arginyl-[protein] + ADP + H(+). Appears to be allosterically activated by the binding of pArg-containing polypeptides to the pArg-binding pocket localized in the C-terminal domain of McsB. In terms of biological role, catalyzes the specific phosphorylation of arginine residues in a large number of proteins. Is part of the bacterial stress response system. Protein arginine phosphorylation has a physiologically important role and is involved in the regulation of many critical cellular processes, such as protein homeostasis, motility, competence, and stringent and stress responses, by regulating gene expression and protein activity. The polypeptide is Protein-arginine kinase (Bacillus cereus (strain ATCC 10987 / NRS 248)).